The following is a 387-amino-acid chain: Galactokinase (387 aa).

E33 to D36 is a substrate binding site. Residues S67 and G124–S130 contribute to the ATP site. Mg(2+)-binding residues include S130 and E162. D174 acts as the Proton acceptor in catalysis. Y224 provides a ligand contact to substrate.

The protein belongs to the GHMP kinase family. GalK subfamily.

Its subcellular location is the cytoplasm. The enzyme catalyses alpha-D-galactose + ATP = alpha-D-galactose 1-phosphate + ADP + H(+). The protein operates within carbohydrate metabolism; galactose metabolism. In terms of biological role, catalyzes the transfer of the gamma-phosphate of ATP to D-galactose to form alpha-D-galactose-1-phosphate (Gal-1-P). This chain is Galactokinase, found in Clostridium perfringens (strain SM101 / Type A).